Here is a 300-residue protein sequence, read N- to C-terminus: Tyrosine recombinase XerC (300 aa).

Residues 2–88 (TQEGQLEKRF…SLRSFYTFLL (87 aa)) enclose the Core-binding (CB) domain. One can recognise a Tyr recombinase domain in the interval 109–294 (RLPKFFYSEE…TKEHLKSTYM (186 aa)). Residues Arg150, Lys174, His246, Arg249, and His272 contribute to the active site. Catalysis depends on Tyr281, which acts as the O-(3'-phospho-DNA)-tyrosine intermediate.

It belongs to the 'phage' integrase family. XerC subfamily. As to quaternary structure, forms a cyclic heterotetrameric complex composed of two molecules of XerC and two molecules of XerD.

The protein localises to the cytoplasm. Site-specific tyrosine recombinase, which acts by catalyzing the cutting and rejoining of the recombining DNA molecules. The XerC-XerD complex is essential to convert dimers of the bacterial chromosome into monomers to permit their segregation at cell division. It also contributes to the segregational stability of plasmids. This chain is Tyrosine recombinase XerC, found in Listeria innocua serovar 6a (strain ATCC BAA-680 / CLIP 11262).